The sequence spans 396 residues: Phosphoglycerate kinase (396 aa).

Substrate is bound by residues 22–24 (DFN), Arg-37, 60–63 (HFGR), Arg-118, and Arg-151. ATP-binding positions include Lys-201, Glu-322, and 352–355 (GGDS).

It belongs to the phosphoglycerate kinase family. Monomer.

It localises to the cytoplasm. It carries out the reaction (2R)-3-phosphoglycerate + ATP = (2R)-3-phospho-glyceroyl phosphate + ADP. Its pathway is carbohydrate degradation; glycolysis; pyruvate from D-glyceraldehyde 3-phosphate: step 2/5. This Wolbachia pipientis subsp. Culex pipiens (strain wPip) protein is Phosphoglycerate kinase.